The chain runs to 176 residues: Large ribosomal subunit protein uL16 (176 aa).

Belongs to the universal ribosomal protein uL16 family.

This Thermoplasma acidophilum (strain ATCC 25905 / DSM 1728 / JCM 9062 / NBRC 15155 / AMRC-C165) protein is Large ribosomal subunit protein uL16.